The primary structure comprises 381 residues: Tumor necrosis factor receptor superfamily member 10B (381 aa).

The signal sequence occupies residues 1 to 52; the sequence is MEPPGPSTPTASAAARADHYTPGLRPLPKRRLLYSFALLLAVLQAVFVPVTA. 3 TNFR-Cys repeats span residues 26-86, 87-129, and 130-169; these read PLPK…GNCK, PCRE…NTVC, and RCKP…NRKC. Over 53–180 the chain is Extracellular; it reads NPAHNRPAGL…SKTAWASWHK (128 aa). Cystine bridges form between C74-C85, C88-C105, C108-C121, C111-C129, C131-C145, C148-C161, and C151-C169. Residues 181-201 form a helical membrane-spanning segment; sequence LGLWIGLLVPVVLLIGALLVW. Residues 202 to 381 lie on the Cytoplasmic side of the membrane; that stretch reads KTGAWRQWLL…ETGPGGSQCV (180 aa). Positions 228–260 are disordered; it reads HSSLLDRQTSSTTNDSNHNTEPGKTQKTGKKLL. A compositionally biased stretch (low complexity) spans 236-247; the sequence is TSSTTNDSNHNT. Positions 273-356 constitute a Death domain; it reads KFIFEYCSDI…DAMEKIEDYA (84 aa). The (Microbial infection) N-beta-linked (GlcNAc) arginine glycan is linked to R293.

As to quaternary structure, monomer. Can interact with TRADD and RIPK1. Three TNFRSF10B molecules interact with the TNFSF10 homotrimer. In the absence of stimulation, interacts with BIRC2, DDX3X and GSK3B. The interaction with BIRC2 and DDX3X is further enhanced upon receptor stimulation and accompanied by DDX3X and BIRC2 cleavage. In terms of processing, (Microbial infection) Glycosylated at Arg-293 by S.typhimurium protein Ssek3. In terms of tissue distribution, highly expressed in heart, lung and kidney.

The protein resides in the membrane. Its function is as follows. Receptor for the cytotoxic ligand TNFSF10/TRAIL. The adapter molecule FADD recruits caspase-8 to the activated receptor. The resulting death-inducing signaling complex (DISC) performs caspase-8 proteolytic activation which initiates the subsequent cascade of caspases (aspartate-specific cysteine proteases) mediating apoptosis. Promotes the activation of NF-kappa-B. Essential for ER stress-induced apoptosis. The sequence is that of Tumor necrosis factor receptor superfamily member 10B (Tnfrsf10b) from Mus musculus (Mouse).